We begin with the raw amino-acid sequence, 442 residues long: Mirror-image polydactyly gene 1 protein (442 aa).

Residues 1–39 (MENWSKDITHSYLEQETTGINKSTQPDEQLTMNSEKSMH) form a disordered region. The span at 12–35 (YLEQETTGINKSTQPDEQLTMNSE) shows a compositional bias: polar residues. Coiled coils occupy residues 107 to 212 (SDKE…LENI) and 253 to 435 (ECKM…KVGT).

As to expression, expressed very weakly in heart, liver, skeletal muscle, kidney, pancreas and fetal kidney. Not detected in brain, placenta and lung.

This chain is Mirror-image polydactyly gene 1 protein (MIPOL1), found in Homo sapiens (Human).